A 245-amino-acid polypeptide reads, in one-letter code: Small ribosomal subunit protein uS3 (245 aa).

A KH type-2 domain is found at 39 to 108 (IRNYIKKNYY…SVFVNVQEVK (70 aa)).

This sequence belongs to the universal ribosomal protein uS3 family. As to quaternary structure, part of the 30S ribosomal subunit. Forms a tight complex with proteins S10 and S14.

Functionally, binds the lower part of the 30S subunit head. Binds mRNA in the 70S ribosome, positioning it for translation. This chain is Small ribosomal subunit protein uS3, found in Dictyoglomus turgidum (strain DSM 6724 / Z-1310).